The primary structure comprises 414 residues: Esterase FrsA (414 aa).

It belongs to the FrsA family.

It catalyses the reaction a carboxylic ester + H2O = an alcohol + a carboxylate + H(+). Catalyzes the hydrolysis of esters. This Shigella flexneri serotype 5b (strain 8401) protein is Esterase FrsA.